Here is a 521-residue protein sequence, read N- to C-terminus: Bifunctional purine biosynthesis protein PurH (521 aa).

An MGS-like domain is found at 1-145 (MIKQALISVS…KNHRDVTVVV (145 aa)).

The protein belongs to the PurH family.

It carries out the reaction (6R)-10-formyltetrahydrofolate + 5-amino-1-(5-phospho-beta-D-ribosyl)imidazole-4-carboxamide = 5-formamido-1-(5-phospho-D-ribosyl)imidazole-4-carboxamide + (6S)-5,6,7,8-tetrahydrofolate. It catalyses the reaction IMP + H2O = 5-formamido-1-(5-phospho-D-ribosyl)imidazole-4-carboxamide. It functions in the pathway purine metabolism; IMP biosynthesis via de novo pathway; 5-formamido-1-(5-phospho-D-ribosyl)imidazole-4-carboxamide from 5-amino-1-(5-phospho-D-ribosyl)imidazole-4-carboxamide (10-formyl THF route): step 1/1. It participates in purine metabolism; IMP biosynthesis via de novo pathway; IMP from 5-formamido-1-(5-phospho-D-ribosyl)imidazole-4-carboxamide: step 1/1. This is Bifunctional purine biosynthesis protein PurH from Burkholderia lata (strain ATCC 17760 / DSM 23089 / LMG 22485 / NCIMB 9086 / R18194 / 383).